The following is a 217-amino-acid chain: MCYSKINNSLRKRFRTFYPVVIDIETAGFNPETDAILEIAIITLKMNEFGLLEKEHLLHFHIQPFKGSRIDKKAIEFHGIDPFSPLRRAISEYEALYSIFNLIHKGIKSNNCTKSIIVAHNAIFDYNFLTAAITRTKIKNNPFHSFVIFDTATLSGLAVGQTVLARACKAIGLTFDNNQAHSALYDTQQTANLFCKIVNRWKTLGGWPPNDTRTIKL.

The Exonuclease domain maps to 20–194; it reads VVIDIETAGF…YDTQQTANLF (175 aa). Positions 23, 25, 181, and 186 each coordinate Mg(2+). His181 serves as the catalytic Proton donor/acceptor.

The protein belongs to the RNase T family. In terms of assembly, homodimer. Mg(2+) is required as a cofactor.

Its function is as follows. Trims short 3' overhangs of a variety of RNA species, leaving a one or two nucleotide 3' overhang. Responsible for the end-turnover of tRNA: specifically removes the terminal AMP residue from uncharged tRNA (tRNA-C-C-A). Also appears to be involved in tRNA biosynthesis. The chain is Ribonuclease T from Buchnera aphidicola subsp. Baizongia pistaciae (strain Bp).